Consider the following 349-residue polypeptide: Phosphate carrier protein, mitochondrial (349 aa).

Solcar repeat units lie at residues 47-131 (KYFA…FKVQ), 144-229 (YRTF…TVEL), and 246-324 (EQLV…VKVW). 6 helical membrane passes run 48–68 (YFAL…TAVV), 108–128 (APTF…YEVF), 147–167 (FVYL…LSPL), 207–227 (PLWG…EKTV), 248–268 (LVVT…VSHP), and 304–324 (IIMI…VKVW).

This sequence belongs to the mitochondrial carrier (TC 2.A.29) family.

It is found in the mitochondrion inner membrane. Its function is as follows. Transport of phosphate groups from the cytosol to the mitochondrial matrix. This is Phosphate carrier protein, mitochondrial from Choristoneura fumiferana (Spruce budworm moth).